Consider the following 1029-residue polypeptide: Toll-like receptor 9 (1029 aa).

A signal peptide spans 1–24 (MGPYCAPHPLSLLVQAAALAAALA). Topologically, residues 25–815 (QGTLPAFLPC…LCLDETLSLD (791 aa)) are extracellular. Cysteines 34 and 44 form a disulfide. Residue 46–50 (WLFLK) participates in DNA binding. 26 LRR repeats span residues 61–84 (RANV…DFVH), 86–109 (SNLR…HFPC), 121–146 (VPTL…SLVS), 149–165 (LSRT…FTGL), 166–189 (HALR…AVEV), 197–220 (LGNL…LPPS), 222–241 (DTLL…DLAN), 242–267 (LTAL…CREC), 282–305 (LSRL…WFRG), 307–331 (GRLQ…IFRN), 332–355 (LTQL…HLQL), 362–385 (LVSL…TLRP), 389–412 (LPKL…IFGA), 414–439 (PSLL…LGEV), 469–492 (CNLN…MFTR), 494–517 (SRLQ…QFVP), 518–541 (LTRL…SFTE), 543–570 (PQLE…SFVA), 572–596 (LPSL…LSSA), 598–620 (LRAL…LYLC), 625–648 (LRNL…HLDN), 650–673 (PKSL…SLTV), 674–697 (LPQL…SLPP), 699–721 (TRLQ…FFVL), 722–745 (ANRL…WFGR), and 747–770 (TETL…AFVD). A glycan (N-linked (GlcNAc...) asparagine) is linked at N63. DNA is bound by residues 71 to 76 (SNRIHH) and 94 to 108 (KWNC…MHFP). Cysteines 97 and 109 form a disulfide. An N-linked (GlcNAc...) asparagine glycan is attached at N128. DNA is bound by residues Y131, R151, and 178–180 (YYK). A disulfide bridge connects residues C177 and C183. N199 carries an N-linked (GlcNAc...) asparagine glycan. Y207 is a DNA binding site. N209 and N241 each carry an N-linked (GlcNAc...) asparagine glycan. Cystine bridges form between C254–C267 and C257–C264. Residue C257 is the site of S-palmitoyl cysteine attachment. R261 lines the DNA pocket. C264 is lipidated: S-palmitoyl cysteine. Residues N331, N339, and N380 are each glycosylated (N-linked (GlcNAc...) asparagine). Residues C469 and C498 are joined by a disulfide bond. Residues N472 and N511 are each glycosylated (N-linked (GlcNAc...) asparagine). The N-linked (GlcNAc...) asparagine glycan is linked to N565. N-linked (GlcNAc...) asparagine glycosylation is found at N667 and N692. N729 is a glycosylation site (N-linked (GlcNAc...) asparagine). 2 disulfide bridges follow: C762-C788 and C764-C807. A helical membrane pass occupies residues 816-836 (CFGFSLLMVALGLAVPMLHHL). The Cytoplasmic portion of the chain corresponds to 837-1029 (CGWDLWYCFH…NFCRGPTTAE (193 aa)). The 146-residue stretch at 864 to 1009 (LLYDAFVVFD…SFWANLGMAL (146 aa)) folds into the TIR domain.

Belongs to the Toll-like receptor family. Monomer and homodimer. Exists as a monomer in the absence of unmethylated cytidine-phosphate-guanosine (CpG) ligand. Proteolytic processing of an insertion loop (Z-loop) is required for homodimerization upon binding to the unmethylated CpG ligand leading to its activation. Interacts with MYD88 via their respective TIR domains. Interacts with BTK. Interacts (via transmembrane domain) with UNC93B1. Interacts with CD300LH; the interaction may promote full activation of TLR9-triggered innate responses. Interacts with CNPY3 and HSP90B1; this interaction is required for proper folding in the endoplasmic reticulum. Interacts with SMPDL3B. Interacts with CD82; this interaction is essential for TLR9-dependent myddosome formation in response to CpG stimulation. Activated by proteolytic cleavage of the flexible loop between repeats LRR14 and LRR15 within the ectodomain. Cleavage requires UNC93B1. Proteolytically processed by first removing the majority of the ectodomain by either asparagine endopeptidase (AEP) or a cathepsin followed by a trimming event that is solely cathepsin mediated and required for optimal receptor signaling. In terms of processing, palmitoylated by ZDHHC3 in the Golgi regulates TLR9 trafficking from the Golgi to endosomes. Depalmitoylation by PPT1 controls the release of TLR9 from UNC93B1 in endosomes.

The protein localises to the endoplasmic reticulum membrane. The protein resides in the endosome. It localises to the lysosome. Its subcellular location is the cytoplasmic vesicle. It is found in the phagosome. Its function is as follows. Key component of innate and adaptive immunity. TLRs (Toll-like receptors) control host immune response against pathogens through recognition of molecular patterns specific to microorganisms. TLR9 is a nucleotide-sensing TLR which is activated by unmethylated cytidine-phosphate-guanosine (CpG) dinucleotides. Acts via MYD88 and TRAF6, leading to NF-kappa-B activation, cytokine secretion and the inflammatory response. Upon CpG stimulation, induces B-cell proliferation, activation, survival and antibody production. The polypeptide is Toll-like receptor 9 (TLR9) (Ovis aries (Sheep)).